The following is a 71-amino-acid chain: Lysis protein (71 aa).

A disordered region spans residues 1-24 (MQQPSQPTRESTKKPVPFQHEEYP). Residues 34–56 (LYVLICLAIFLSKFTNQLLASLL) form a helical membrane-spanning segment.

Belongs to the Leviviricetes lysis protein family.

It is found in the host cell inner membrane. The protein resides in the host cell outer membrane. Functionally, induces the formation of specific membrane adhesion sites between the inner and outer membranes, apparently leading to host cell lysis. Lysis may be performed via activation of host murein hydrolases. This is Lysis protein from Enterobacteria phage fr (Bacteriophage fr).